We begin with the raw amino-acid sequence, 611 residues long: Chaperone protein DnaK (611 aa).

Position 173 is a phosphothreonine; by autocatalysis (Thr173). Positions 579 to 592 (AAGQAEGAQGAQDA) are enriched in low complexity. The segment at 579–598 (AAGQAEGAQGAQDAGAKKDN) is disordered.

It belongs to the heat shock protein 70 family.

Functionally, acts as a chaperone. This is Chaperone protein DnaK from Bacillus cereus (strain AH187).